The chain runs to 1009 residues: Delphilin (1009 aa).

Disordered stretches follow at residues 28 to 82, 170 to 193, 322 to 369, 414 to 635, and 990 to 1009; these read CRSK…SNTM, EGPV…RSRS, ASPD…SRDT, ELSS…SDNN, and SETQ…PLAW. Residues 44–53 show a composition bias toward basic and acidic residues; that stretch reads RSQDHHERPQ. Positions 95 to 172 constitute a PDZ domain; the sequence is TIRVYRGKKS…MPSLVVEEGP (78 aa). The span at 322 to 332 shows a compositional bias: polar residues; that stretch reads ASPDSVDSNPY. Composition is skewed to low complexity over residues 334 to 352 and 427 to 439; these read SLDS…SPLP and DDST…SGSD. Composition is skewed to pro residues over residues 441–455, 462–477, and 484–493; these read IPPP…PPPL, SPLP…PPPA, and IAPPPPPPRP. Over residues 521–535 the composition is skewed to low complexity; that stretch reads SSPQPSSQPILQLHQ. Polar residues predominate over residues 557–602; that stretch reads AQHTRLQHPSQSIYQSQQTTVPRTSPSLTKQKSLHSQPSQQSFEGT. Residues 607-628 show a composition bias toward pro residues; it reads VPPPPPPPLPPPCDPPPLPKPS. Residues 629–1009 enclose the FH2 domain; the sequence is PKASDNNHMS…SPRIASPLAW (381 aa).

It is found in the postsynaptic cell membrane. Functionally, postsynaptic scaffolding protein. This Danio rerio (Zebrafish) protein is Delphilin (grid2ip).